Consider the following 120-residue polypeptide: Large ribosomal subunit protein uL18 (120 aa).

Belongs to the universal ribosomal protein uL18 family. In terms of assembly, part of the 50S ribosomal subunit; part of the 5S rRNA/L5/L18/L25 subcomplex. Contacts the 5S and 23S rRNAs.

In terms of biological role, this is one of the proteins that bind and probably mediate the attachment of the 5S RNA into the large ribosomal subunit, where it forms part of the central protuberance. The polypeptide is Large ribosomal subunit protein uL18 (Allorhizobium ampelinum (strain ATCC BAA-846 / DSM 112012 / S4) (Agrobacterium vitis (strain S4))).